Reading from the N-terminus, the 401-residue chain is S-adenosylmethionine synthase (401 aa).

Residue 135–140 participates in ATP binding; the sequence is GHGSGD.

This sequence belongs to the AdoMet synthase 2 family. Mg(2+) is required as a cofactor.

It catalyses the reaction L-methionine + ATP + H2O = S-adenosyl-L-methionine + phosphate + diphosphate. It functions in the pathway amino-acid biosynthesis; S-adenosyl-L-methionine biosynthesis; S-adenosyl-L-methionine from L-methionine: step 1/1. In terms of biological role, catalyzes the formation of S-adenosylmethionine from methionine and ATP. The protein is S-adenosylmethionine synthase of Methanobrevibacter smithii (strain ATCC 35061 / DSM 861 / OCM 144 / PS).